A 718-amino-acid polypeptide reads, in one-letter code: Catalase-peroxidase (718 aa).

Residues 98-219 constitute a cross-link (tryptophyl-tyrosyl-methioninium (Trp-Tyr) (with M-245)); sequence WHAAGTYRMG…LAATEMGLIY (122 aa). The active-site Proton acceptor is the histidine 99. A cross-link (tryptophyl-tyrosyl-methioninium (Tyr-Met) (with W-98)) is located at residues 219–245; sequence YVNPEGPQASGDPRSAAPFIRATFGNM. Histidine 260 serves as a coordination point for heme b.

This sequence belongs to the peroxidase family. Peroxidase/catalase subfamily. Homodimer or homotetramer. The cofactor is heme b. Formation of the three residue Trp-Tyr-Met cross-link is important for the catalase, but not the peroxidase activity of the enzyme.

The enzyme catalyses H2O2 + AH2 = A + 2 H2O. It catalyses the reaction 2 H2O2 = O2 + 2 H2O. Its function is as follows. Bifunctional enzyme with both catalase and broad-spectrum peroxidase activity. This chain is Catalase-peroxidase, found in Acinetobacter baumannii (strain ATCC 17978 / DSM 105126 / CIP 53.77 / LMG 1025 / NCDC KC755 / 5377).